Reading from the N-terminus, the 393-residue chain is Glucose-1-phosphate adenylyltransferase (393 aa).

Alpha-D-glucose 1-phosphate contacts are provided by residues tyrosine 105, glycine 170, 185–186, and serine 196; that span reads EK.

The protein belongs to the bacterial/plant glucose-1-phosphate adenylyltransferase family. As to quaternary structure, homotetramer.

The catalysed reaction is alpha-D-glucose 1-phosphate + ATP + H(+) = ADP-alpha-D-glucose + diphosphate. Its pathway is glycan biosynthesis; glycogen biosynthesis. Its function is as follows. Involved in the biosynthesis of ADP-glucose, a building block required for the elongation reactions to produce glycogen. Catalyzes the reaction between ATP and alpha-D-glucose 1-phosphate (G1P) to produce pyrophosphate and ADP-Glc. This is Glucose-1-phosphate adenylyltransferase from Clostridium perfringens (strain 13 / Type A).